The sequence spans 84 residues: Large ribosomal subunit protein bL27 (84 aa).

The tract at residues 1 to 21 (MAHKKGGGSTKNGRDSNPKYL) is disordered.

Belongs to the bacterial ribosomal protein bL27 family.

The protein is Large ribosomal subunit protein bL27 of Chlorobium phaeovibrioides (strain DSM 265 / 1930) (Prosthecochloris vibrioformis (strain DSM 265)).